Consider the following 129-residue polypeptide: Protein RfbJ (129 aa).

It belongs to the glycosyltransferase 2 family.

Its pathway is bacterial outer membrane biogenesis; lipopolysaccharide biosynthesis. The sequence is that of Protein RfbJ (rfbJ) from Shigella flexneri.